The primary structure comprises 141 residues: Large ribosomal subunit protein uL14 (141 aa).

This sequence belongs to the universal ribosomal protein uL14 family. Part of the 50S ribosomal subunit. Forms a cluster with proteins L3 and L24e, part of which may contact the 16S rRNA in 2 intersubunit bridges.

Binds to 23S rRNA. Forms part of two intersubunit bridges in the 70S ribosome. This is Large ribosomal subunit protein uL14 from Pyrococcus horikoshii (strain ATCC 700860 / DSM 12428 / JCM 9974 / NBRC 100139 / OT-3).